We begin with the raw amino-acid sequence, 1142 residues long: MKDDKGRSDTVNGYYISNSKLSSGFYKRNNANTASNDEKPNLEQNDIPSVTSSGSSTPSSISIEKEIKISKGNVIVKAIRSWSLYVAIIAILLLLVILHSFQGRPQDNGCGKSYVWPSYVRFVDFDERYTRFANKYSLYLYREKSVEESDEPSGIPILFIPGNAGSYKQVRAFAAQAAHVYANAYAEDADGTLNAGKLVPDFFVVDFNEDFSAFHGQTLLDQAEYVNDAIPYILSLYRQNRKISSEYDNEAFPPPTSVILLGHSMGGIVAQATFTMKNYVDGSVNTLITLATPHAMAPLPFDRHLVEFYESIKNFWSQSFLLSPEENSLDDVLLVSIAGGGLDTHVVPEYSSISTFVPPSNGLMVFTSGIPSVWAEIDHQAMAWCENFRRVLIRGIFAIMDARTSKCTVSLNLRKELLSRAYIQGSSFQNDITQISKPIAQYKALDLDLTYVYSEMPGQLLFLNQLGVSYIRHHIFPIPKPTSSIDRFELLTDQPIDLSSSNIKVLACRLDPKIDNTISALLENGNNKVINANCHLLRELVTLLPASTAYTSSPYGGDSFYNYVLPKEKMDDYHFILVSDDSKAPASGFVVGGFSNVSLDPKTIKGSQIELFKSGRKFQFDTKGSISKRFRFPGIQSSIMAYTISVTYELYPGAVPQKEFTPMLKQSIESPFETKYHVNMSNTELSVHGISPFMEFFGKESEKSLTLEFFLNPAIYKSVYVSIQPSYYRSAGRLLMRYRTLLASFPVVVISLAAYNQFRYFHYGSAYLSMSAALEVMIRKGLIKLLFLVSILSIAFSYLISRVELIVADGADPVASWKIFAMMVPKSFWKQNHLLFGLQTAQFWFLAPLLTLMFVGLVITASVIILCVMHLLAFIYGIYLRYKGLTFTGVCQAVKFSFQCLRTRNTRKLDHGEFKKLSSFLSQRNMYYANPSLCYVYGKKHMQARIIGIMLLLLMAMTVVPFQLVYGVALCTQTVTTAKALHLARFCTKSSHYRKKLWDFYNFSCTITILMLLLAPLDFPVLIVWARNLSMHWSIPFPTHHNFFSIIPFILLTEILRTGKMLPRLNDVEYYINNVFLFLLSFYSLIYGAEKPYLIHNVVGLYFFWLLFLYAKNGFFVQNISKWPIIPRMKYFIKHKFLRSIS.

The interval Gly24–Ser59 is disordered. Positions Ile47–Ser59 are enriched in low complexity. The chain crosses the membrane as a helical span at residues Ser81 to Phe101. Ser264 is a catalytic residue. 2 N-linked (GlcNAc...) asparagine glycosylation sites follow: Asn596 and Asn679. Transmembrane regions (helical) follow at residues Leu741–Phe761, Gly781–Ser801, Leu849–Met869, and Ile946–Tyr966. Residue Asn1002 is glycosylated (N-linked (GlcNAc...) asparagine). The helical transmembrane segment at Thr1006 to Ala1026 threads the bilayer. The N-linked (GlcNAc...) asparagine glycan is linked to Asn1028. 3 helical membrane-spanning segments follow: residues Ile1035–Ile1055, Val1075–Ile1095, and Asn1097–Val1117. Residue Asn1119 is glycosylated (N-linked (GlcNAc...) asparagine).

The protein belongs to the GPI inositol-deacylase family.

Its subcellular location is the endoplasmic reticulum membrane. In terms of biological role, involved in inositol deacylation of GPI-anchored proteins which plays important roles in the quality control and ER-associated degradation of GPI-anchored proteins. This is GPI inositol-deacylase (bst1) from Schizosaccharomyces pombe (strain 972 / ATCC 24843) (Fission yeast).